The primary structure comprises 313 residues: Cytochrome c biogenesis protein CcsA (313 aa).

The next 8 helical transmembrane spans lie at 13–35 (ISFS…EIAG), 43–63 (GMIA…IYSG), 67–87 (LSNL…IHMI), 96–116 (FLSS…TSGL), 142–162 (MLLS…LLVI), 219–239 (VIGI…VWAN), 252–269 (ETWA…LHTR), and 280–300 (AIVA…VNLL).

It belongs to the CcmF/CycK/Ccl1/NrfE/CcsA family. May interact with Ccs1.

The protein localises to the plastid. It is found in the chloroplast thylakoid membrane. Its function is as follows. Required during biogenesis of c-type cytochromes (cytochrome c6 and cytochrome f) at the step of heme attachment. The sequence is that of Cytochrome c biogenesis protein CcsA from Amborella trichopoda.